A 353-amino-acid polypeptide reads, in one-letter code: DNA polymerase IV (353 aa).

The 182-residue stretch at 6–187 (IIHVDCDCFY…LPVSKLHGVG (182 aa)) folds into the UmuC domain. Residues D10 and D105 each coordinate Mg(2+). E106 is a catalytic residue.

This sequence belongs to the DNA polymerase type-Y family. In terms of assembly, monomer. It depends on Mg(2+) as a cofactor.

It is found in the cytoplasm. The enzyme catalyses DNA(n) + a 2'-deoxyribonucleoside 5'-triphosphate = DNA(n+1) + diphosphate. Functionally, poorly processive, error-prone DNA polymerase involved in untargeted mutagenesis. Copies undamaged DNA at stalled replication forks, which arise in vivo from mismatched or misaligned primer ends. These misaligned primers can be extended by PolIV. Exhibits no 3'-5' exonuclease (proofreading) activity. May be involved in translesional synthesis, in conjunction with the beta clamp from PolIII. The polypeptide is DNA polymerase IV (Pseudomonas fluorescens (strain Pf0-1)).